A 345-amino-acid chain; its full sequence is MAYRFQGFLYGILFLAFFSLLSLFISATLTPFLSPLIIGILLGAALSPFYPKLNQHYDIQAGITFGAKKLLRLGIILYGSYITLGEIATLGLNGFLISLFIVAGVFIAAIFIGKMLKLDNEISLLVGIGSAVCGAAAILALESTLKTHPSKSSVALGFIVIFGLIGMILLPAIYYANILPLNDYQWGIFIGASLHEVANVVGAAAISPESQNVAIIVKMTRVVLLVPLLLIISYIIFKLNQKRVQNDTNIPNGDTHAKQNALYIPYFAFGFLGVIVLNSFIDFPPVVVESTQFASKICLVFAMVALGLQIDWQKFISFGAKTFALALILFIILMFGTYGLVYIMF.

Transmembrane regions (helical) follow at residues 7–29, 33–50, 90–112, 122–141, 154–176, 186–208, 215–237, 262–281, 293–312, and 322–344; these read GFLYGILFLAFFSLLSLFISATL, LSPLIIGILLGAALSPFY, LGLNGFLISLFIVAGVFIAAIFI, ISLLVGIGSAVCGAAAILAL, VALGFIVIFGLIGMILLPAIYYA, WGIFIGASLHEVANVVGAAAISP, IIVKMTRVVLLVPLLLIISYIIF, LYIPYFAFGFLGVIVLNSFI, FASKICLVFAMVALGLQIDW, and TFALALILFIILMFGTYGLVYIM.

It belongs to the UPF0324 family.

The protein localises to the cell membrane. The sequence is that of UPF0324 membrane protein HH_1161 from Helicobacter hepaticus (strain ATCC 51449 / 3B1).